The chain runs to 135 residues: uncharacterized protein (135 aa).

The next 3 helical transmembrane spans lie at 12 to 32, 68 to 88, and 98 to 118; these read IPIL…YNGI, SMIG…AKFC, and GILY…FYLF.

It localises to the cell membrane. This is an uncharacterized protein from Methanocaldococcus jannaschii (strain ATCC 43067 / DSM 2661 / JAL-1 / JCM 10045 / NBRC 100440) (Methanococcus jannaschii).